The primary structure comprises 401 residues: Imidazolonepropionase (401 aa).

The Fe(3+) site is built by His70 and His72. 2 residues coordinate Zn(2+): His70 and His72. 4-imidazolone-5-propanoate is bound by residues Arg79, Tyr142, and His175. Residue Tyr142 participates in N-formimidoyl-L-glutamate binding. His238 lines the Fe(3+) pocket. His238 serves as a coordination point for Zn(2+). Residue Gln241 participates in 4-imidazolone-5-propanoate binding. Asp313 is a binding site for Fe(3+). Zn(2+) is bound at residue Asp313. The N-formimidoyl-L-glutamate site is built by Asn315 and Gly317. Thr318 is a binding site for 4-imidazolone-5-propanoate.

The protein belongs to the metallo-dependent hydrolases superfamily. HutI family. Zn(2+) is required as a cofactor. Fe(3+) serves as cofactor.

The protein resides in the cytoplasm. The catalysed reaction is 4-imidazolone-5-propanoate + H2O = N-formimidoyl-L-glutamate. The protein operates within amino-acid degradation; L-histidine degradation into L-glutamate; N-formimidoyl-L-glutamate from L-histidine: step 3/3. Its function is as follows. Catalyzes the hydrolytic cleavage of the carbon-nitrogen bond in imidazolone-5-propanoate to yield N-formimidoyl-L-glutamate. It is the third step in the universal histidine degradation pathway. In Xanthomonas axonopodis pv. citri (strain 306), this protein is Imidazolonepropionase.